We begin with the raw amino-acid sequence, 109 residues long: uncharacterized protein (109 aa).

The chain crosses the membrane as a helical span at residues 29–49 (ITIIITLVIIFIIFTLIILYF).

It localises to the membrane. This is an uncharacterized protein from Sputnik virophage.